The following is a 636-amino-acid chain: Carbon monoxide dehydrogenase 1 (636 aa).

Positions 38, 46, 47, 50, 55, and 69 each coordinate [4Fe-4S] cluster. Histidine 262, cysteine 297, cysteine 335, cysteine 448, cysteine 478, and cysteine 528 together coordinate [Ni-4Fe-5S] cluster.

It belongs to the Ni-containing carbon monoxide dehydrogenase family. Homodimer. [4Fe-4S] cluster serves as cofactor. Requires [Ni-4Fe-5S] cluster as cofactor.

It is found in the cytoplasm. The protein resides in the cell membrane. It catalyses the reaction CO + 2 oxidized [2Fe-2S]-[ferredoxin] + H2O = 2 reduced [2Fe-2S]-[ferredoxin] + CO2 + 2 H(+). Its activity is regulated as follows. Inactivated by O(2). Its function is as follows. CODH oxidizes carbon monoxide coupled, via CooF, to the reduction of a hydrogen cation by a hydrogenase (possibly CooH). The chain is Carbon monoxide dehydrogenase 1 (cooS1) from Carboxydothermus hydrogenoformans (strain ATCC BAA-161 / DSM 6008 / Z-2901).